We begin with the raw amino-acid sequence, 277 residues long: MENTENSVDAKSFKNAETKILHGSKSMDSGMSFDNSYKMDYPEMGLCIIINNKNFHKSTGMAPRSGTDVDAANLRETFTNLKYEVRNKNDLTCEEILELMNSVSKEDHSKRSSFVCVLLSHGDEGIIFGTNGPVDLRKVTGFFRGDYCRSLTGKPKLFIIQACRGTELDCGIETDSGIEDDMACQKIPVEADFLYAYSTAPGYYSWRNSKDGSWFIQSLCAMLKLYAHKLEFMHILTRVNRKVATEFESFSLDSAFHGKKQIPCIVSMLTKELYLYH.

Methionine 1 carries the post-translational modification N-acetylmethionine. 2 propeptides span residues 1–9 (MENTENSVD) and 10–28 (AKSF…KSMD). Position 11 is an N6-acetyllysine (lysine 11). Serine 26 carries the post-translational modification Phosphoserine. Active-site residues include histidine 121 and cysteine 163. Cysteine 163 is modified (S-nitrosocysteine; in inhibited form).

Belongs to the peptidase C14A family. As to quaternary structure, heterotetramer that consists of two anti-parallel arranged heterodimers, each one formed by a 17 kDa (p17) and a 12 kDa (p12) subunit. Interacts with BIRC6/bruce. Post-translationally, cleavage by granzyme B, caspase-6, caspase-8 and caspase-10 generates the two active subunits. Additional processing of the propeptides is likely due to the autocatalytic activity of the activated protease. Active heterodimers between the small subunit of caspase-7 protease and the large subunit of caspase-3 also occur and vice versa. S-nitrosylated on its catalytic site cysteine in unstimulated cell lines and denitrosylated upon activation of the Fas apoptotic pathway, associated with an increase in intracellular caspase activity. Fas therefore activates caspase-3 not only by inducing the cleavage of the caspase zymogen to its active subunits, but also by stimulating the denitrosylation of its active site thiol. In terms of processing, ubiquitinated by BIRC6; this activity is inhibited by DIABLO/SMAC.

It is found in the cytoplasm. It carries out the reaction Strict requirement for an Asp residue at positions P1 and P4. It has a preferred cleavage sequence of Asp-Xaa-Xaa-Asp-|- with a hydrophobic amino-acid residue at P2 and a hydrophilic amino-acid residue at P3, although Val or Ala are also accepted at this position.. Inhibited by BIRC6; following inhibition of BIRC6-caspase binding by DIABLO/SMAC, BIRC6 is subjected to caspase cleavage, leading to an increase in active caspases. Functionally, involved in the activation cascade of caspases responsible for apoptosis execution. At the onset of apoptosis, it proteolytically cleaves poly(ADP-ribose) polymerase PARP1 at a '216-Asp-|-Gly-217' bond. Cleaves and activates sterol regulatory element binding proteins (SREBPs) between the basic helix-loop-helix leucine zipper domain and the membrane attachment domain. Cleaves and activates caspase-6, -7 and -9 (CASP6, CASP7 and CASP9, respectively). Cleaves and inactivates interleukin-18 (IL18). Triggers cell adhesion in sympathetic neurons through RET cleavage. Cleaves IL-1 beta between an Asp and an Ala, releasing the mature cytokine which is involved in a variety of inflammatory processes. Cleaves and inhibits serine/threonine-protein kinase AKT1 in response to oxidative stress. Acts as an inhibitor of type I interferon production during virus-induced apoptosis by mediating cleavage of antiviral proteins CGAS, IRF3 and MAVS, thereby preventing cytokine overproduction. Also involved in pyroptosis by mediating cleavage and activation of gasdermin-E (GSDME). Cleaves XRCC4 and phospholipid scramblase proteins XKR4, XKR8 and XKR9, leading to promote phosphatidylserine exposure on apoptotic cell surface. Cleaves BIRC6 following inhibition of BIRC6-caspase binding by DIABLO/SMAC. This chain is Caspase-3 (CASP3), found in Canis lupus familiaris (Dog).